The chain runs to 347 residues: 5-deoxyribose 1-phosphate isomerase (347 aa).

Substrate is bound by residues 48–50 (RGA), R91, and Q198. D239 (proton donor) is an active-site residue. 249 to 250 (NK) provides a ligand contact to substrate.

It belongs to the EIF-2B alpha/beta/delta subunits family. DrdI subfamily.

It carries out the reaction 5-deoxy-alpha-D-ribose 1-phosphate = 5-deoxy-D-ribulose 1-phosphate. Its pathway is carbohydrate degradation. Catalyzes the isomerization of 5-deoxy-alpha-D-ribose 1-phosphate to 5-deoxy-D-ribulose 1-phosphate, as part of a 5-deoxyribose salvage pathway that recycles this toxic radical SAM enzyme by-product to mainstream metabolites. The protein is 5-deoxyribose 1-phosphate isomerase of Petrotoga mobilis (strain DSM 10674 / SJ95).